Consider the following 193-residue polypeptide: Large ribosomal subunit protein eL18 (193 aa).

Residues 158–193 are disordered; it reads HFGAAGVPGSHAKPHVSSRGKERQRSSKRRHAFRHK. Positions 183 to 193 are enriched in basic residues; it reads SSKRRHAFRHK.

It belongs to the eukaryotic ribosomal protein eL18 family.

Its subcellular location is the cytoplasm. This is Large ribosomal subunit protein eL18 (RPL18-A) from Trypanosoma brucei brucei (strain 927/4 GUTat10.1).